We begin with the raw amino-acid sequence, 585 residues long: Arginine--tRNA ligase (585 aa).

A 'HIGH' region motif is present at residues alanine 131–histidine 141.

It belongs to the class-I aminoacyl-tRNA synthetase family. In terms of assembly, monomer.

It is found in the cytoplasm. The enzyme catalyses tRNA(Arg) + L-arginine + ATP = L-arginyl-tRNA(Arg) + AMP + diphosphate. In Brucella melitensis biotype 1 (strain ATCC 23456 / CCUG 17765 / NCTC 10094 / 16M), this protein is Arginine--tRNA ligase.